The chain runs to 186 residues: 3-hydroxyanthranilate 3,4-dioxygenase (186 aa).

Arg-44 contributes to the O2 binding site. 3 residues coordinate Fe cation: His-48, Glu-54, and His-96. Residue Glu-54 participates in substrate binding. Residues Arg-100 and Glu-110 each coordinate substrate. The a divalent metal cation site is built by Cys-125, Cys-130, Cys-164, and Cys-167.

Belongs to the 3-HAO family. Fe(2+) serves as cofactor.

It localises to the cytoplasm. The catalysed reaction is 3-hydroxyanthranilate + O2 = (2Z,4Z)-2-amino-3-carboxymuconate 6-semialdehyde. It participates in cofactor biosynthesis; NAD(+) biosynthesis; quinolinate from L-kynurenine: step 3/3. Functionally, catalyzes the oxidative ring opening of 3-hydroxyanthranilate to 2-amino-3-carboxymuconate semialdehyde, which spontaneously cyclizes to quinolinate. The sequence is that of 3-hydroxyanthranilate 3,4-dioxygenase from Chaetomium globosum (strain ATCC 6205 / CBS 148.51 / DSM 1962 / NBRC 6347 / NRRL 1970) (Soil fungus).